The primary structure comprises 344 residues: Probable electron transfer flavoprotein subunit alpha, mitochondrial (344 aa).

284–312 (LYIAIGVSGAVQHLAGMKDSKVIVAINND) contacts FAD.

Belongs to the ETF alpha-subunit/FixB family. Heterodimer of an alpha and a beta subunit. Requires FAD as cofactor.

The protein resides in the mitochondrion matrix. Its function is as follows. The electron transfer flavoprotein serves as a specific electron acceptor for several dehydrogenases, including five acyl-CoA dehydrogenases, glutaryl-CoA and sarcosine dehydrogenase. It transfers the electrons to the main mitochondrial respiratory chain via ETF-ubiquinone oxidoreductase (ETF dehydrogenase). The sequence is that of Probable electron transfer flavoprotein subunit alpha, mitochondrial (AIM45) from Saccharomyces cerevisiae (strain ATCC 204508 / S288c) (Baker's yeast).